The following is a 247-amino-acid chain: Osmotin-like protein NP24-I (247 aa).

A signal peptide spans 1 to 21 (MGYLTSSFVLFFLLCVTYTYA). 8 cysteine pairs are disulfide-bonded: C30-C225, C72-C82, C87-C93, C141-C213, C146-C196, C154-C164, C168-C177, and C178-C183.

Belongs to the thaumatin family. In terms of tissue distribution, highest levels of both isoforms found in the outer pericarp, with smaller amounts in the inner pericarp.

The protein localises to the cytoplasm. It localises to the vacuole. It catalyses the reaction Endohydrolysis of (1-&gt;3)- or (1-&gt;4)-linkages in beta-D-glucans when the glucose residue whose reducing group is involved in the linkage to be hydrolyzed is itself substituted at C-3.. Has antifungal activity against P.betae and F.dahliae. May be involved in disease resistance in tomatoes and/or have a possible role in fruit development and ripening. Binds to beta-glucans and exhibits beta-1,3-D-glucanase activity. In Solanum lycopersicum (Tomato), this protein is Osmotin-like protein NP24-I.